A 597-amino-acid chain; its full sequence is Zinc finger CCCH domain-containing protein 29 (597 aa).

2 ANK repeats span residues 76-106 (EERT…DVNR) and 111-143 (EKVT…SPNC). C3H1-type zinc fingers lie at residues 254 to 281 (PYTC…HGVF) and 289 to 313 (QYRT…HRRD). Residues 320 to 337 (ASTGSAMVSPRSSNQSPE) are compositionally biased toward polar residues. The tract at residues 320–341 (ASTGSAMVSPRSSNQSPEMSVM) is disordered.

In terms of tissue distribution, expressed in roots and anthers.

Its subcellular location is the nucleus. Involved in salt stress response. May positively modulate plant tolerance to salt stress. The polypeptide is Zinc finger CCCH domain-containing protein 29 (Arabidopsis thaliana (Mouse-ear cress)).